The chain runs to 317 residues: uncharacterized protein (317 aa).

This is an uncharacterized protein from Schizosaccharomyces pombe (strain 972 / ATCC 24843) (Fission yeast).